The sequence spans 819 residues: Lysine-specific demethylase JMJ18 (819 aa).

The segment at 1 to 39 (MENPPLESEIKEDMSLKNHPPDKDKDKDTIMEQPSSPRH) is disordered. Residues 8-30 (SEIKEDMSLKNHPPDKDKDKDTI) show a composition bias toward basic and acidic residues. Residues 59–100 (APVFTPSLEEFVDPLAYIEKIRPLAEPYGICRIIPPSTWKPP) enclose the JmjN domain. The disordered stretch occupies residues 120-171 (TVDLLQNREPMKKKPKSRKRKRRRNSRMGSSKRRSGSSPAESTSSPEAEEKF). The short motif at 130–137 (MKKKPKSR) is the Nuclear localization signal element. The span at 130 to 154 (MKKKPKSRKRKRRRNSRMGSSKRRS) shows a compositional bias: basic residues. The segment covering 155-165 (GSSPAESTSSP) has biased composition (low complexity). Positions 261 to 427 (QYTLSGWNLN…HGQNAVELYS (167 aa)) constitute a JmjC domain. Residues His-307, Glu-309, and His-395 each contribute to the Fe cation site. Zn(2+) contacts are provided by Cys-519, Cys-522, Cys-533, Cys-535, Cys-542, His-545, Cys-550, and Cys-552. Residues 519 to 571 (CFSCFYDLHLSASGCKCSPEEYACLKHADDLCSCDVKDGFILLRYTMDELSSL) form a C5HC2 zinc finger. Positions 644 to 702 (ASENLGVSVEPINLGFLIFGKLWCNKYAIFPKGFRSRVKFYNVLDPTRMSNYISEVLDA) constitute an FYR N-terminal domain. The 85-residue stretch at 704–788 (LMGPLFRVTL…HRLVEYWNHK (85 aa)) folds into the FYR C-terminal domain.

The protein belongs to the JARID1 histone demethylase family. It depends on Fe(2+) as a cofactor. Expressed in vascular tissues of roots, cotyledons, leaves and flowers. Expressed predominantly in phloem companion cells of roots. Present in inflorescences, roots, siliques, leaves and stems.

It localises to the nucleus. It carries out the reaction N(6),N(6),N(6)-trimethyl-L-lysyl(4)-[histone H3] + 2-oxoglutarate + O2 = N(6),N(6)-dimethyl-L-lysyl(4)-[histone H3] + formaldehyde + succinate + CO2. It catalyses the reaction N(6),N(6)-dimethyl-L-lysyl(4)-[histone H3] + 2-oxoglutarate + O2 = N(6)-methyl-L-lysyl(4)-[histone H3] + formaldehyde + succinate + CO2. In terms of biological role, histone demethylase that demethylates 'Lys-4' (H3K4me) of histone H3 with a specific activity for H3K4me3 and H3K4me2. No activity on H3K9me3/2, H3K27me3/2 and H3K36me3/2. Involved in the control of flowering time by demethylating H3K4me3 at the FLC locus and repressing its expression. The repression of FLC level and reduction in H3K4me3 at the FLC locus results in induction of the flowering activator FT, which is a downstream target of FLC. This is Lysine-specific demethylase JMJ18 from Arabidopsis thaliana (Mouse-ear cress).